The primary structure comprises 462 residues: Argininosuccinate lyase 2 (462 aa).

It belongs to the lyase 1 family. Argininosuccinate lyase subfamily.

The protein localises to the cytoplasm. The catalysed reaction is 2-(N(omega)-L-arginino)succinate = fumarate + L-arginine. The protein operates within amino-acid biosynthesis; L-arginine biosynthesis; L-arginine from L-ornithine and carbamoyl phosphate: step 3/3. The protein is Argininosuccinate lyase 2 of Shouchella clausii (strain KSM-K16) (Alkalihalobacillus clausii).